Here is a 166-residue protein sequence, read N- to C-terminus: Protein SprT (166 aa).

Residues 20–164 (EHLANANRKL…CVRCGDLLVA (145 aa)) form the SprT-like domain. His78 lines the Zn(2+) pocket. The active site involves Glu79. His82 is a binding site for Zn(2+).

This sequence belongs to the SprT family. Zn(2+) serves as cofactor.

The protein resides in the cytoplasm. The sequence is that of Protein SprT from Klebsiella pneumoniae subsp. pneumoniae (strain ATCC 700721 / MGH 78578).